The primary structure comprises 421 residues: 3-oxoacyl-[acyl-carrier-protein] synthase 2 (421 aa).

Positions 1–417 (MRRVVITGTG…GTNASLILRR (417 aa)) constitute a Ketosynthase family 3 (KS3) domain. Residues Cys-170, His-311, and His-347 each act as for beta-ketoacyl synthase activity in the active site.

The protein belongs to the thiolase-like superfamily. Beta-ketoacyl-ACP synthases family. In terms of assembly, homodimer.

It catalyses the reaction a fatty acyl-[ACP] + malonyl-[ACP] + H(+) = a 3-oxoacyl-[ACP] + holo-[ACP] + CO2. The enzyme catalyses (9Z)-hexadecenoyl-[ACP] + malonyl-[ACP] + H(+) = 3-oxo-(11Z)-octadecenoyl-[ACP] + holo-[ACP] + CO2. It functions in the pathway lipid metabolism; fatty acid biosynthesis. Its function is as follows. Involved in the type II fatty acid elongation cycle. Catalyzes the elongation of a wide range of acyl-ACP by the addition of two carbons from malonyl-ACP to an acyl acceptor. Can efficiently catalyze the conversion of palmitoleoyl-ACP (cis-hexadec-9-enoyl-ACP) to cis-vaccenoyl-ACP (cis-octadec-11-enoyl-ACP), an essential step in the thermal regulation of fatty acid composition. The chain is 3-oxoacyl-[acyl-carrier-protein] synthase 2 (fabF) from Rhizobium meliloti (strain 1021) (Ensifer meliloti).